Reading from the N-terminus, the 691-residue chain is Elongation factor G (691 aa).

The 275-residue stretch at Lys-12–Leu-286 folds into the tr-type G domain. GTP is bound by residues Ala-21 to Thr-28, Asp-85 to His-89, and Asn-139 to Asp-142.

Belongs to the TRAFAC class translation factor GTPase superfamily. Classic translation factor GTPase family. EF-G/EF-2 subfamily.

It localises to the cytoplasm. Catalyzes the GTP-dependent ribosomal translocation step during translation elongation. During this step, the ribosome changes from the pre-translocational (PRE) to the post-translocational (POST) state as the newly formed A-site-bound peptidyl-tRNA and P-site-bound deacylated tRNA move to the P and E sites, respectively. Catalyzes the coordinated movement of the two tRNA molecules, the mRNA and conformational changes in the ribosome. This is Elongation factor G from Thermosipho melanesiensis (strain DSM 12029 / CIP 104789 / BI429).